Here is a 205-residue protein sequence, read N- to C-terminus: uncharacterized protein (205 aa).

Residues 1 to 82 (MIKVYGVPGW…MVLDRRPDLA (82 aa)) enclose the GST N-terminal domain. Glutathione contacts are provided by residues valine 53 and 66 to 67 (ET). The region spanning 86–205 (GRAERQLFQR…QEVLKRNEII (120 aa)) is the GST C-terminal domain.

The protein belongs to the GST superfamily. Beta family.

This is an uncharacterized protein from Escherichia coli (strain K12).